Reading from the N-terminus, the 187-residue chain is Putative zinc finger protein 833 (187 aa).

C2H2-type zinc fingers lie at residues Tyr10–His32, Tyr38–His60, Tyr66–His88, Cys94–His116, Tyr122–His144, and Tyr150–His172.

In Homo sapiens (Human), this protein is Putative zinc finger protein 833 (ZNF833P).